Here is a 286-residue protein sequence, read N- to C-terminus: ATP synthase gamma chain (286 aa).

The protein belongs to the ATPase gamma chain family. As to quaternary structure, F-type ATPases have 2 components, CF(1) - the catalytic core - and CF(0) - the membrane proton channel. CF(1) has five subunits: alpha(3), beta(3), gamma(1), delta(1), epsilon(1). CF(0) has three main subunits: a, b and c.

It localises to the cell inner membrane. Produces ATP from ADP in the presence of a proton gradient across the membrane. The gamma chain is believed to be important in regulating ATPase activity and the flow of protons through the CF(0) complex. The sequence is that of ATP synthase gamma chain from Pseudomonas putida (strain ATCC 700007 / DSM 6899 / JCM 31910 / BCRC 17059 / LMG 24140 / F1).